Here is a 318-residue protein sequence, read N- to C-terminus: MFMVNLLMLVIPVMLAMAFLTLLERKTLGYMQFRKGPNVVGPNGLLQPFADAMKLFIKEPLQPLTSSTSLYIIAPTLALSIALIMWTPLPIPYPLVNINLGVLFILATSSLAVYSILWSGWASNSKYALIGALRAVAQTISYEVTLAIILLCILLMSGSFTLSTLIKTQEHTWLLLPSWPLAMMWFISTLAETNRAPFDLTEGESELVSGFNVEYAAGPFALFFMAEYTNIIMMNALTATIFMSAIHSMNFPEFFSINFTLKTLLLTTIFLWVRASYPRFRYDQLMHLLWKNFLPLTLAMCMWHTALPIFLANIPPQT.

A run of 8 helical transmembrane segments spans residues 2–22 (FMVN…FLTL), 71–91 (YIIA…PLPI), 98–118 (INLG…SILW), 146–166 (LAII…STLI), 171–191 (HTWL…STLA), 222–242 (LFFM…ATIF), 253–273 (EFFS…FLWV), and 294–314 (LPLT…LANI).

Belongs to the complex I subunit 1 family.

It localises to the mitochondrion inner membrane. It catalyses the reaction a ubiquinone + NADH + 5 H(+)(in) = a ubiquinol + NAD(+) + 4 H(+)(out). In terms of biological role, core subunit of the mitochondrial membrane respiratory chain NADH dehydrogenase (Complex I) that is believed to belong to the minimal assembly required for catalysis. Complex I functions in the transfer of electrons from NADH to the respiratory chain. The immediate electron acceptor for the enzyme is believed to be ubiquinone. The chain is NADH-ubiquinone oxidoreductase chain 1 (MT-ND1) from Nycticebus coucang (Slow loris).